Here is a 148-residue protein sequence, read N- to C-terminus: Large ribosomal subunit protein uL22 (148 aa).

Belongs to the universal ribosomal protein uL22 family. Part of the 50S ribosomal subunit.

This protein binds specifically to 23S rRNA; its binding is stimulated by other ribosomal proteins, e.g. L4, L17, and L20. It is important during the early stages of 50S assembly. It makes multiple contacts with different domains of the 23S rRNA in the assembled 50S subunit and ribosome. Its function is as follows. The globular domain of the protein is located near the polypeptide exit tunnel on the outside of the subunit, while an extended beta-hairpin is found that lines the wall of the exit tunnel in the center of the 70S ribosome. The protein is Large ribosomal subunit protein uL22 of Thermosipho africanus (strain TCF52B).